The following is a 245-amino-acid chain: Biosynthetic peptidoglycan transglycosylase (245 aa).

The helical transmembrane segment at 19–41 threads the bilayer; it reads CLRWVLAAPLLFAAASVLQVLFL.

This sequence belongs to the glycosyltransferase 51 family.

The protein resides in the cell inner membrane. The catalysed reaction is [GlcNAc-(1-&gt;4)-Mur2Ac(oyl-L-Ala-gamma-D-Glu-L-Lys-D-Ala-D-Ala)](n)-di-trans,octa-cis-undecaprenyl diphosphate + beta-D-GlcNAc-(1-&gt;4)-Mur2Ac(oyl-L-Ala-gamma-D-Glu-L-Lys-D-Ala-D-Ala)-di-trans,octa-cis-undecaprenyl diphosphate = [GlcNAc-(1-&gt;4)-Mur2Ac(oyl-L-Ala-gamma-D-Glu-L-Lys-D-Ala-D-Ala)](n+1)-di-trans,octa-cis-undecaprenyl diphosphate + di-trans,octa-cis-undecaprenyl diphosphate + H(+). The protein operates within cell wall biogenesis; peptidoglycan biosynthesis. Peptidoglycan polymerase that catalyzes glycan chain elongation from lipid-linked precursors. This chain is Biosynthetic peptidoglycan transglycosylase, found in Xanthomonas oryzae pv. oryzae (strain KACC10331 / KXO85).